The primary structure comprises 218 residues: Small ribosomal subunit protein uS3c (218 aa).

The region spanning 47-118 (VQKNMRISSG…RLNIAITRVA (72 aa)) is the KH type-2 domain.

The protein belongs to the universal ribosomal protein uS3 family. Part of the 30S ribosomal subunit.

Its subcellular location is the plastid. It localises to the chloroplast. The chain is Small ribosomal subunit protein uS3c (rps3) from Calycanthus floridus var. glaucus (Eastern sweetshrub).